The following is a 468-amino-acid chain: MRLYNTLTRKKEEFHPIDEKEVKMYSCGPTVYNYFHIGNARPFIIFDTLRRYLEYKGYNVKFVQNFTDIDDKMIKRANEEGITVKELADKFINEYFVDAKGLGIKEATVHPRATENIDAIIEMIKKLEEKGFAYNVDGDVYFSARKFTEYGKLSHQSLEDLELGARIDVDERKKDPMDFALWKAQKPGEPAWDSPWGKGRPGWHIECSAMANKYLGETIDIHSGGQDLVFPHHENEIAQSEAANGKPFARFWLHNGFINVDGEKMAKSKGNFFTVRDIAKTFDYEVIRFFMLSAHYRSPINFSAELLEQAKNGLERIYNCLDNLEYLKEHAQAEKITDSERELQNRLLGIKAKFIEAMDDDINTADAIAAIFDIVKEVNTNINATSNSSKEIIDFSLSLIKELGGVLGIAQKSRQKVLDKEIEELIERRQKARKEKDWKTADEIRDKLKEMGIILEDTPQGVKWTIQR.

C27 contacts Zn(2+). A 'HIGH' region motif is present at residues 29-39 (PTVYNYFHIGN). Positions 207, 232, and 236 each coordinate Zn(2+). The short motif at 264–268 (KMAKS) is the 'KMSKS' region element. K267 is a binding site for ATP.

The protein belongs to the class-I aminoacyl-tRNA synthetase family. Monomer. Requires Zn(2+) as cofactor.

The protein localises to the cytoplasm. The catalysed reaction is tRNA(Cys) + L-cysteine + ATP = L-cysteinyl-tRNA(Cys) + AMP + diphosphate. This chain is Cysteine--tRNA ligase, found in Acetivibrio thermocellus (strain ATCC 27405 / DSM 1237 / JCM 9322 / NBRC 103400 / NCIMB 10682 / NRRL B-4536 / VPI 7372) (Clostridium thermocellum).